A 494-amino-acid polypeptide reads, in one-letter code: Ketol-acid reductoisomerase (NADP(+)) (494 aa).

Residues 14–208 (LDQLGRCRFM…GGHRAGCLES (195 aa)) enclose the KARI N-terminal Rossmann domain. Residues 45–48 (CGAQ), arginine 68, arginine 76, serine 78, and 108–110 (DKQ) each bind NADP(+). The active site involves histidine 132. Glycine 158 is a binding site for NADP(+). 2 consecutive KARI C-terminal knotted domains span residues 209–344 (SFVA…NYPE) and 345–487 (SDVE…MSDM). Mg(2+)-binding residues include aspartate 217, glutamate 221, glutamate 389, and glutamate 393. Serine 414 contributes to the substrate binding site.

It belongs to the ketol-acid reductoisomerase family. It depends on Mg(2+) as a cofactor.

It catalyses the reaction (2R)-2,3-dihydroxy-3-methylbutanoate + NADP(+) = (2S)-2-acetolactate + NADPH + H(+). It carries out the reaction (2R,3R)-2,3-dihydroxy-3-methylpentanoate + NADP(+) = (S)-2-ethyl-2-hydroxy-3-oxobutanoate + NADPH + H(+). It participates in amino-acid biosynthesis; L-isoleucine biosynthesis; L-isoleucine from 2-oxobutanoate: step 2/4. The protein operates within amino-acid biosynthesis; L-valine biosynthesis; L-valine from pyruvate: step 2/4. In terms of biological role, involved in the biosynthesis of branched-chain amino acids (BCAA). Catalyzes an alkyl-migration followed by a ketol-acid reduction of (S)-2-acetolactate (S2AL) to yield (R)-2,3-dihydroxy-isovalerate. In the isomerase reaction, S2AL is rearranged via a Mg-dependent methyl migration to produce 3-hydroxy-3-methyl-2-ketobutyrate (HMKB). In the reductase reaction, this 2-ketoacid undergoes a metal-dependent reduction by NADPH to yield (R)-2,3-dihydroxy-isovalerate. The protein is Ketol-acid reductoisomerase (NADP(+)) of Aliivibrio fischeri (strain ATCC 700601 / ES114) (Vibrio fischeri).